The primary structure comprises 267 residues: PF03932 family protein CutC (267 aa).

This sequence belongs to the CutC family.

The protein localises to the cytoplasm. The protein is PF03932 family protein CutC of Xylella fastidiosa (strain 9a5c).